We begin with the raw amino-acid sequence, 397 residues long: LIM/homeobox protein Lhx3 (397 aa).

LIM zinc-binding domains are found at residues 31-81 and 90-144; these read CAGC…CKDD and CAAC…CKAD. Residue threonine 63 is modified to Phosphothreonine. Serine 71 carries the post-translational modification Phosphoserine. The homeobox DNA-binding region spans 157–216; sequence AKRPRTTITAKQLETLKSAYNTSPKPARHVREQLSSETGLDMRVVQVWFQNRRAKEKRLK. The segment at 212–397 is disordered; it reads EKRLKKDAGR…WLDEVDHAQF (186 aa). Phosphotyrosine is present on tyrosine 227. Serine 234 and serine 238 each carry phosphoserine. The span at 316–331 shows a compositional bias: pro residues; that stretch reads GVPPSPAAPQSLPGPQ.

As to quaternary structure, interacts with POU1F1. At neuronal promoters, interacts with LDB1, in motor neurons LDB1 is displaced by ISL1 and a ternary complex is formed in which ISL1 contacts both LHX3 and LDB1; allosteric structural changes in the DNA binding domain of LHX3, induced by the ISL1-LHX3 interaction, may explain differences in sequence specificity of the different complexes. Interacts with LDB2. May interact with CITED2/MRG1.

The protein localises to the nucleus. Its function is as follows. Transcription factor. Recognizes and binds to the consensus sequence motif 5'-AATTAATTA-3' in the regulatory elements of target genes, such as glycoprotein hormones alpha chain CGA and visual system homeobox CHX10, positively modulating transcription; transcription can be co-activated by LDB2. Synergistically enhances transcription from the prolactin promoter in cooperation with POU1F1/Pit-1. Required for the establishment of the specialized cells of the pituitary gland and the nervous system. Involved in the development of interneurons and motor neurons in cooperation with LDB1 and ISL1. This Homo sapiens (Human) protein is LIM/homeobox protein Lhx3 (LHX3).